Consider the following 552-residue polypeptide: Glutamine--tRNA ligase (552 aa).

Positions 33 to 43 (PEPNGYLHIGH) match the 'HIGH' region motif. ATP is bound by residues 34-36 (EPN) and 40-46 (HIGHAKS). The L-glutamine site is built by Asp-66 and Tyr-210. ATP contacts are provided by residues Thr-229, 259 to 260 (RL), and 267 to 269 (MSK). A 'KMSKS' region motif is present at residues 266 to 270 (VMSKR).

This sequence belongs to the class-I aminoacyl-tRNA synthetase family. As to quaternary structure, monomer.

The protein resides in the cytoplasm. It catalyses the reaction tRNA(Gln) + L-glutamine + ATP = L-glutaminyl-tRNA(Gln) + AMP + diphosphate. The polypeptide is Glutamine--tRNA ligase (Clostridium perfringens (strain ATCC 13124 / DSM 756 / JCM 1290 / NCIMB 6125 / NCTC 8237 / Type A)).